Consider the following 648-residue polypeptide: MMGIGKNTASKSVEAGGSTEGKYEEEAKHSNFFTLPVVINGGATSSGEQDNEDTELMAIYTTENGIAEKSSLAETLDSTGSLDPQRSDMIYTIEDVPPWYLCIFLGLQHYLTCFSGTIAVPFLLADAMCVGDDQWATSQLIGTIFFCVGITTLLQTTFGCRLPLFQASAFAFLAPARAILSLDKWKCNTTEITVANGTAELLEHIWHPRIQEIQGAIIMSSLIEVVIGLLGLPGALLRYIGPLTITPTVALIGLSGFQAAGERAGKHWGIAMLTIFLVLLFSQYARNVKFPLPIYKSKKGWTAYKFQLFKMFPIILAILVSWLLCFIFTVTDVFPSNSTDYGYYARTDARKGVLLVAPWFKVPYPFQWGMPTVSAAGVIGMLSAVVASIIESIGDYYACARLSCAPPPPIHAINRGIFVEGLSCVLDGIFGTGNGSTSSSPNIGVLGITKVGSRRVIQYGAALMLGLGMVGKFSALFASLPDPVLGALFCTLFGMITAVGLSNLQFIDLNSSRNLFVLGFSIFFGLVLPSYLRQNPLVTGITGIDQILNVLLTTAMFVGGCVAFILDNTIPGTPEERGIKKWKKGVSKGSKSLDGMESYNLPFGMNIIKKYRCFSYLPISPTFAGYTWKGFGKSENSRSSDKDSQATV.

The segment at 1–21 (MMGIGKNTASKSVEAGGSTEG) is disordered. The Cytoplasmic portion of the chain corresponds to 9 to 110 (ASKSVEAGGS…LCIFLGLQHY (102 aa)). Residue Ser70 is modified to Phosphoserine. Thr75 bears the Phosphothreonine mark. Ser78 is modified (phosphoserine). At Thr79 the chain carries Phosphothreonine. The residue at position 81 (Ser81) is a Phosphoserine. A helical membrane pass occupies residues 111–131 (LTCFSGTIAVPFLLADAMCVG). Residues 132 to 139 (DDQWATSQ) lie on the Extracellular side of the membrane. Residues 140-160 (LIGTIFFCVGITTLLQTTFGC) traverse the membrane as a helical segment. Position 161 (Arg161) is a topological domain, cytoplasmic. A helical transmembrane segment spans residues 162–182 (LPLFQASAFAFLAPARAILSL). Residues 183 to 216 (DKWKCNTTEITVANGTAELLEHIWHPRIQEIQGA) are Extracellular-facing. N-linked (GlcNAc...) asparagine glycans are attached at residues Asn188 and Asn196. The helical transmembrane segment at 217–237 (IIMSSLIEVVIGLLGLPGALL) threads the bilayer. At 238–264 (RYIGPLTITPTVALIGLSGFQAAGERA) the chain is on the cytoplasmic side. The chain crosses the membrane as a helical span at residues 265–282 (GKHWGIAMLTIFLVLLFS). Residues 283-286 (QYAR) lie on the Extracellular side of the membrane. The segment at residues 287 to 300 (NVKFPLPIYKSKKG) is an intramembrane region (helical). Topologically, residues 301–307 (WTAYKFQ) are extracellular. A helical membrane pass occupies residues 308–328 (LFKMFPIILAILVSWLLCFIF). The Cytoplasmic segment spans residues 329–369 (TVTDVFPSNSTDYGYYARTDARKGVLLVAPWFKVPYPFQWG). The chain crosses the membrane as a helical span at residues 370–390 (MPTVSAAGVIGMLSAVVASII). Topologically, residues 391-415 (ESIGDYYACARLSCAPPPPIHAINR) are extracellular. Residues 416–436 (GIFVEGLSCVLDGIFGTGNGS) form a helical membrane-spanning segment. At 437–459 (TSSSPNIGVLGITKVGSRRVIQY) the chain is on the cytoplasmic side. The helical transmembrane segment at 460 to 480 (GAALMLGLGMVGKFSALFASL) threads the bilayer. The Extracellular portion of the chain corresponds to 481 to 483 (PDP). The helical transmembrane segment at 484 to 504 (VLGALFCTLFGMITAVGLSNL) threads the bilayer. The Cytoplasmic portion of the chain corresponds to 505–514 (QFIDLNSSRN). The helical transmembrane segment at 515–535 (LFVLGFSIFFGLVLPSYLRQN) threads the bilayer. At 536 to 545 (PLVTGITGID) the chain is on the extracellular side. Residues 546-566 (QILNVLLTTAMFVGGCVAFIL) traverse the membrane as a helical segment. The Cytoplasmic segment spans residues 567–648 (DNTIPGTPEE…SSDKDSQATV (82 aa)). Thr647 carries the post-translational modification Phosphothreonine.

This sequence belongs to the nucleobase:cation symporter-2 (NCS2) (TC 2.A.40) family. In terms of assembly, interacts with CLSTN3. Phosphorylated. In terms of tissue distribution, expressed in metabolically active and specialized tissues, including high expression in brain and adrenals. Detected in a wide range of tissues. Expression in kidney is almost undetectable.

It is found in the cell membrane. The catalysed reaction is L-ascorbate(out) + 2 Na(+)(out) = L-ascorbate(in) + 2 Na(+)(in). Functionally, sodium/ascorbate cotransporter. Mediates electrogenic uptake of vitamin C, with a stoichiometry of 2 Na(+) for each ascorbate. The polypeptide is Solute carrier family 23 member 2 (Slc23a2) (Mus musculus (Mouse)).